Consider the following 369-residue polypeptide: NAD-dependent epimerase/dehydratase FUM13 (369 aa).

Tyr-176 contacts NADP(+).

This sequence belongs to the NAD(P)-dependent epimerase/dehydratase family. Dihydroflavonol-4-reductase subfamily.

It participates in mycotoxin biosynthesis. NAD-dependent epimerase/dehydratase; part of the gene cluster that mediates the biosynthesis of fumonisins B1 (FB1), B2 (FB2), B3 (FB3), and B4 (FB4), which are carcinogenic mycotoxins. Within the pathway, FUM13 stereospecifically reduces the intermediate 3-keto intermediate 2-amino-3-oxo-12,16-dimethylicosane to the 3-hydroxyl product 2-amino-3-hydroxy-12,16-dimethylicosane. The biosynthesis starts with the FUM1-catalyzed carbon chain assembly from one molecule of acetyl-CoA, eight molecules of malonyl-CoA, and two molecules of methionine (in S-adenosyl form). The C18 polyketide chain is released from the enzyme by a nucleophilic attack of a carbanion, which is derived from R-carbon of alanine by decarboxylation, on the carbonyl carbon of polyketide acyl chain. This step is catalyzed by the pyridoxal 5'-phosphate-dependent aminoacyl transferase FUM8. The resultant 3-keto intermediate is then stereospecifically reduced to a 3-hydroxyl product by reductase FUM13. Subsequent oxidations at C-10 by the cytochrome P450 monooxygenase FUM2, C-14 and C-15 by FUM6, FUM12 or FUM15, tricarballylic esterification of the hydroxyl groups on C-14 and C-15 by acyltransferase FUM14, and C-5 hydroxylation by 2-keto-glutarate-dependent dioxygenase FUM3 furnish the biosynthesis of fumonisins. The tricarballylic moieties are most likely derived from the citric acid cycle, and their addition to the carbon backbone may involve FUM7, FUM10, FUM11 and FUM14. This is NAD-dependent epimerase/dehydratase FUM13 from Gibberella moniliformis (strain M3125 / FGSC 7600) (Maize ear and stalk rot fungus).